An 87-amino-acid polypeptide reads, in one-letter code: MVNMEASMFLTFAGLVLLFVVCYASESEEKEFPKEMLSSIFAVDNDFKQEERDCAGYMRECKEKLCCSGYVCSSRWKWCVLPAPWRR.

The N-terminal stretch at 1–24 is a signal peptide; sequence MVNMEASMFLTFAGLVLLFVVCYA. Positions 25–52 are excised as a propeptide; it reads SESEEKEFPKEMLSSIFAVDNDFKQEER. Intrachain disulfides connect cysteine 54–cysteine 67, cysteine 61–cysteine 72, and cysteine 66–cysteine 79.

This sequence belongs to the neurotoxin 10 (Hwtx-1) family. 51 (Hntx-8) subfamily. Hntx-8 sub-subfamily. In terms of tissue distribution, expressed by the venom gland.

The protein resides in the secreted. Ion channel inhibitor. The chain is U3-theraphotoxin-Hhn1a 10 from Cyriopagopus hainanus (Chinese bird spider).